Reading from the N-terminus, the 369-residue chain is S-(hydroxymethyl)glutathione dehydrogenase (369 aa).

Residues Cys40, His62, Cys92, Cys95, Cys98, Cys106, and Cys169 each contribute to the Zn(2+) site.

This sequence belongs to the zinc-containing alcohol dehydrogenase family. Class-III subfamily. As to quaternary structure, homodimer. Requires Zn(2+) as cofactor.

Its subcellular location is the cytoplasm. The enzyme catalyses S-(hydroxymethyl)glutathione + NADP(+) = S-formylglutathione + NADPH + H(+). The catalysed reaction is S-(hydroxymethyl)glutathione + NAD(+) = S-formylglutathione + NADH + H(+). It catalyses the reaction a primary alcohol + NAD(+) = an aldehyde + NADH + H(+). It carries out the reaction a secondary alcohol + NAD(+) = a ketone + NADH + H(+). The enzyme catalyses S-nitrosoglutathione + NADH + H(+) = S-(hydroxysulfenamide)glutathione + NAD(+). Has high formaldehyde dehydrogenase activity in the presence of glutathione and catalyzes the oxidation of normal alcohols in a reaction that is not GSH-dependent. In addition, hemithiolacetals other than those formed from GSH, including omega-thiol fatty acids, also are substrates. Also acts as a S-nitroso-glutathione reductase by catalyzing the NADH-dependent reduction of S-nitrosoglutathione. The sequence is that of S-(hydroxymethyl)glutathione dehydrogenase (frmA) from Photobacterium damsela subsp. piscicida (Pasteurella piscicida).